Consider the following 92-residue polypeptide: uncharacterized protein (92 aa).

Belongs to the IUNH family.

This is an uncharacterized protein from Corynebacterium ammoniagenes (Brevibacterium ammoniagenes).